Consider the following 476-residue polypeptide: Nitrosuccinate lyase (476 aa).

Arg137, Arg140, and Arg201 together coordinate fumarate. Ser302 (proton acceptor) is an active-site residue. Residues Lys308 and Asn310 each contribute to the fumarate site. Arg341 functions as the Proton donor in the catalytic mechanism.

This sequence belongs to the class-II fumarase/aspartase family. Homotetramer.

The enzyme catalyses 2-nitrobutanedioate = fumarate + nitrite + H(+). It participates in antibiotic biosynthesis. Its function is as follows. Part of a gene cluster involved in the biosynthesis of cremeomycin, a light-sensitive o-diazoquinone with antibacterial and antiproliferative effects. Catalyzes the formation of nitrous acid from nitrosuccinic acid (2-nitrobutanedioate) by elimination of its nitro group. The protein is Nitrosuccinate lyase of Streptomyces cremeus.